The following is a 435-amino-acid chain: Cyclic 2,3-diphosphoglycerate synthetase (435 aa).

It belongs to the cyclic 2,3-diphosphoglycerate synthetase family.

The protein resides in the cytoplasm. The enzyme catalyses (2R)-2,3-bisphosphoglycerate + ATP + H(+) = cyclic (2R)-2,3-bisphosphoglycerate + ADP + phosphate. Functionally, catalyzes the formation of cyclic 2,3-diphosphoglycerate (cDPG) by formation of an intramolecular phosphoanhydride bond at the expense of ATP. This chain is Cyclic 2,3-diphosphoglycerate synthetase, found in Pyrococcus horikoshii (strain ATCC 700860 / DSM 12428 / JCM 9974 / NBRC 100139 / OT-3).